A 398-amino-acid polypeptide reads, in one-letter code: Homeobox protein knotted-1-like 1 (398 aa).

Disordered stretches follow at residues 20–61, 78–102, and 241–273; these read SPIS…HHHQ, NCFR…ASSS, and LNNP…EIDP. Residues 23-56 show a composition bias toward low complexity; that stretch reads SSSNKNDNTSDTNNNNNNNNSSNYGPGYNNTNNN. Polar residues predominate over residues 87-102; sequence PNNNNNPSVKSEASSS. In terms of domain architecture, ELK spans 279–299; the sequence is ELKNHLLKKYSGYLSSLKQEL. Positions 300–363 form a DNA-binding region, homeobox; TALE-type; it reads SKKKKKGKLP…NQRKRHWKPS (64 aa).

This sequence belongs to the TALE/KNOX homeobox family. May form heterodimeric complex with the TALE/BELL proteins BEL1, BLH2, BLH8/PNF and BLH9/PNY. Interacts with OFP1, OFP2, OFP4, OFP6 and OFP12. Interacts with CCT7 and CCT8. Interacts with KNATM-B. Binds to AGO10/PNH. Interacts with BZIP30. Expressed in the vegetative meristem. Present in the base of flower primordia.

The protein resides in the nucleus. May play a role in meristem function, and may be involved in maintaining cells in an undifferentiated, meristematic state, and its expression disappears at the same time the shoot apex undergoes the transition from vegetative to reproductive development. Positive regulator of LATERAL ORGAN BOUNDARIES (LOB). Probably binds to the DNA sequence 5'-TGAC-3'. Able to traffic from the L1 to the L2/L3 layers of the meristem, presumably through plasmodesmata. This chain is Homeobox protein knotted-1-like 1 (KNAT1), found in Arabidopsis thaliana (Mouse-ear cress).